We begin with the raw amino-acid sequence, 243 residues long: Ubiquinone biosynthesis O-methyltransferase (243 aa).

Residues Arg-44, Gly-64, Asp-85, and Met-129 each coordinate S-adenosyl-L-methionine.

Belongs to the methyltransferase superfamily. UbiG/COQ3 family.

The catalysed reaction is a 3-demethylubiquinol + S-adenosyl-L-methionine = a ubiquinol + S-adenosyl-L-homocysteine + H(+). The enzyme catalyses a 3-(all-trans-polyprenyl)benzene-1,2-diol + S-adenosyl-L-methionine = a 2-methoxy-6-(all-trans-polyprenyl)phenol + S-adenosyl-L-homocysteine + H(+). Its pathway is cofactor biosynthesis; ubiquinone biosynthesis. Its function is as follows. O-methyltransferase that catalyzes the 2 O-methylation steps in the ubiquinone biosynthetic pathway. This Cronobacter sakazakii (strain ATCC BAA-894) (Enterobacter sakazakii) protein is Ubiquinone biosynthesis O-methyltransferase.